We begin with the raw amino-acid sequence, 92 residues long: Small ribosomal subunit protein uS19c (92 aa).

The protein belongs to the universal ribosomal protein uS19 family.

It localises to the plastid. The protein resides in the chloroplast. Protein S19 forms a complex with S13 that binds strongly to the 16S ribosomal RNA. In Nandina domestica (Heavenly bamboo), this protein is Small ribosomal subunit protein uS19c.